The sequence spans 156 residues: Aspartate carbamoyltransferase regulatory chain (156 aa).

Cys-109, Cys-114, Cys-140, and Cys-143 together coordinate Zn(2+).

Belongs to the PyrI family. In terms of assembly, contains catalytic and regulatory chains. It depends on Zn(2+) as a cofactor.

Involved in allosteric regulation of aspartate carbamoyltransferase. The sequence is that of Aspartate carbamoyltransferase regulatory chain from Methanosarcina acetivorans (strain ATCC 35395 / DSM 2834 / JCM 12185 / C2A).